A 328-amino-acid chain; its full sequence is Ribosomal RNA small subunit methyltransferase H (328 aa).

S-adenosyl-L-methionine-binding positions include 37 to 39 (GGH), aspartate 57, phenylalanine 83, aspartate 104, and glutamine 111.

It belongs to the methyltransferase superfamily. RsmH family.

Its subcellular location is the cytoplasm. It carries out the reaction cytidine(1402) in 16S rRNA + S-adenosyl-L-methionine = N(4)-methylcytidine(1402) in 16S rRNA + S-adenosyl-L-homocysteine + H(+). Its function is as follows. Specifically methylates the N4 position of cytidine in position 1402 (C1402) of 16S rRNA. This Neisseria meningitidis serogroup A / serotype 4A (strain DSM 15465 / Z2491) protein is Ribosomal RNA small subunit methyltransferase H.